A 179-amino-acid polypeptide reads, in one-letter code: Large ribosomal subunit protein uL5 (179 aa).

The protein belongs to the universal ribosomal protein uL5 family. As to quaternary structure, part of the 50S ribosomal subunit; part of the 5S rRNA/L5/L18/L25 subcomplex. Contacts the 5S rRNA and the P site tRNA. Forms a bridge to the 30S subunit in the 70S ribosome.

This is one of the proteins that bind and probably mediate the attachment of the 5S RNA into the large ribosomal subunit, where it forms part of the central protuberance. In the 70S ribosome it contacts protein S13 of the 30S subunit (bridge B1b), connecting the 2 subunits; this bridge is implicated in subunit movement. Contacts the P site tRNA; the 5S rRNA and some of its associated proteins might help stabilize positioning of ribosome-bound tRNAs. The sequence is that of Large ribosomal subunit protein uL5 from Aeromonas salmonicida (strain A449).